A 279-amino-acid chain; its full sequence is DegV domain-containing protein SACOL1460 (279 aa).

One can recognise a DegV domain in the interval 4–278 (QIIVTDSTSD…QGAIGLVVLK (275 aa)). The hexadecanoate site is built by threonine 61 and serine 93.

Functionally, may bind long-chain fatty acids, such as palmitate, and may play a role in lipid transport or fatty acid metabolism. This chain is DegV domain-containing protein SACOL1460, found in Staphylococcus aureus (strain COL).